The primary structure comprises 204 residues: N-(5'-phosphoribosyl)anthranilate isomerase (204 aa).

Belongs to the TrpF family.

The catalysed reaction is N-(5-phospho-beta-D-ribosyl)anthranilate = 1-(2-carboxyphenylamino)-1-deoxy-D-ribulose 5-phosphate. It functions in the pathway amino-acid biosynthesis; L-tryptophan biosynthesis; L-tryptophan from chorismate: step 3/5. This is N-(5'-phosphoribosyl)anthranilate isomerase from Syntrophomonas wolfei subsp. wolfei (strain DSM 2245B / Goettingen).